The following is a 497-amino-acid chain: UDP-N-acetylmuramoyl-L-alanyl-D-glutamate--2,6-diaminopimelate ligase (497 aa).

UDP-N-acetyl-alpha-D-muramoyl-L-alanyl-D-glutamate is bound by residues L27 and S29. An ATP-binding site is contributed by 116–122 (GTNGKTT). UDP-N-acetyl-alpha-D-muramoyl-L-alanyl-D-glutamate contacts are provided by residues N157, 158-159 (TT), S185, Q191, and R193. An N6-carboxylysine modification is found at K225. Residues R392, 416 to 419 (DNPR), G467, and E471 contribute to the meso-2,6-diaminopimelate site. Residues 416-419 (DNPR) carry the Meso-diaminopimelate recognition motif motif.

Belongs to the MurCDEF family. MurE subfamily. The cofactor is Mg(2+). In terms of processing, carboxylation is probably crucial for Mg(2+) binding and, consequently, for the gamma-phosphate positioning of ATP.

The protein localises to the cytoplasm. It carries out the reaction UDP-N-acetyl-alpha-D-muramoyl-L-alanyl-D-glutamate + meso-2,6-diaminopimelate + ATP = UDP-N-acetyl-alpha-D-muramoyl-L-alanyl-gamma-D-glutamyl-meso-2,6-diaminopimelate + ADP + phosphate + H(+). The protein operates within cell wall biogenesis; peptidoglycan biosynthesis. In terms of biological role, catalyzes the addition of meso-diaminopimelic acid to the nucleotide precursor UDP-N-acetylmuramoyl-L-alanyl-D-glutamate (UMAG) in the biosynthesis of bacterial cell-wall peptidoglycan. The chain is UDP-N-acetylmuramoyl-L-alanyl-D-glutamate--2,6-diaminopimelate ligase from Buchnera aphidicola subsp. Schizaphis graminum (strain Sg).